The primary structure comprises 339 residues: DNA-directed RNA polymerase subunit alpha (339 aa).

Residues 1 to 233 are alpha N-terminal domain (alpha-NTD); the sequence is MVREEVAGST…DLFLPFLHAE (233 aa). The tract at residues 264–339 is alpha C-terminal domain (alpha-CTD); that stretch reads KKGIPLNSIF…IDLLKNKLSF (76 aa).

Belongs to the RNA polymerase alpha chain family. As to quaternary structure, in plastids the minimal PEP RNA polymerase catalytic core is composed of four subunits: alpha, beta, beta', and beta''. When a (nuclear-encoded) sigma factor is associated with the core the holoenzyme is formed, which can initiate transcription.

It is found in the plastid. Its subcellular location is the chloroplast. The enzyme catalyses RNA(n) + a ribonucleoside 5'-triphosphate = RNA(n+1) + diphosphate. Functionally, DNA-dependent RNA polymerase catalyzes the transcription of DNA into RNA using the four ribonucleoside triphosphates as substrates. This Aegilops tauschii (Tausch's goatgrass) protein is DNA-directed RNA polymerase subunit alpha.